We begin with the raw amino-acid sequence, 240 residues long: Biosynthetic peptidoglycan transglycosylase (240 aa).

A helical transmembrane segment spans residues 16–36; that stretch reads VLMALLCLFLIYELAMFSMVV.

The protein belongs to the glycosyltransferase 51 family.

The protein resides in the cell inner membrane. The catalysed reaction is [GlcNAc-(1-&gt;4)-Mur2Ac(oyl-L-Ala-gamma-D-Glu-L-Lys-D-Ala-D-Ala)](n)-di-trans,octa-cis-undecaprenyl diphosphate + beta-D-GlcNAc-(1-&gt;4)-Mur2Ac(oyl-L-Ala-gamma-D-Glu-L-Lys-D-Ala-D-Ala)-di-trans,octa-cis-undecaprenyl diphosphate = [GlcNAc-(1-&gt;4)-Mur2Ac(oyl-L-Ala-gamma-D-Glu-L-Lys-D-Ala-D-Ala)](n+1)-di-trans,octa-cis-undecaprenyl diphosphate + di-trans,octa-cis-undecaprenyl diphosphate + H(+). The protein operates within cell wall biogenesis; peptidoglycan biosynthesis. In terms of biological role, peptidoglycan polymerase that catalyzes glycan chain elongation from lipid-linked precursors. This Bordetella avium (strain 197N) protein is Biosynthetic peptidoglycan transglycosylase.